The chain runs to 428 residues: Serine--tRNA ligase (428 aa).

235-237 (TAE) contributes to the L-serine binding site. 266–268 (RYE) contributes to the ATP binding site. Residue Glu289 participates in L-serine binding. 353–356 (EVSS) is an ATP binding site. L-serine is bound at residue Ser389.

Belongs to the class-II aminoacyl-tRNA synthetase family. Type-1 seryl-tRNA synthetase subfamily. As to quaternary structure, homodimer. The tRNA molecule binds across the dimer.

It is found in the cytoplasm. The enzyme catalyses tRNA(Ser) + L-serine + ATP = L-seryl-tRNA(Ser) + AMP + diphosphate + H(+). It carries out the reaction tRNA(Sec) + L-serine + ATP = L-seryl-tRNA(Sec) + AMP + diphosphate + H(+). It participates in aminoacyl-tRNA biosynthesis; selenocysteinyl-tRNA(Sec) biosynthesis; L-seryl-tRNA(Sec) from L-serine and tRNA(Sec): step 1/1. Catalyzes the attachment of serine to tRNA(Ser). Is also able to aminoacylate tRNA(Sec) with serine, to form the misacylated tRNA L-seryl-tRNA(Sec), which will be further converted into selenocysteinyl-tRNA(Sec). The sequence is that of Serine--tRNA ligase from Blochmanniella pennsylvanica (strain BPEN).